The chain runs to 60 residues: UPF0434 protein Vapar_2640 (60 aa).

The protein belongs to the UPF0434 family.

In Variovorax paradoxus (strain S110), this protein is UPF0434 protein Vapar_2640.